A 193-amino-acid chain; its full sequence is MKVIKGLTAGLIFLFLCACGGQQIKDPLNYEVEPFTFQNQDGKNVSLESLKGEVWLADFIFTNCETICPPMTAHMTDLQKKLKAENIDVRIISFSVDPENDKPKQLKKFAANYPLSFDNWDFLTGYSQSEIEEFALKSFKAIVKKPEGEDQVIHQSSFYLVGPDGKVLKDYNGVENTPYDDIISDVKSASTLK.

A signal peptide spans 1 to 18 (MKVIKGLTAGLIFLFLCA). Cysteine 19 is lipidated: N-palmitoyl cysteine. A lipid anchor (S-diacylglycerol cysteine) is attached at cysteine 19. A Thioredoxin domain is found at 26 to 191 (DPLNYEVEPF…IISDVKSAST (166 aa)). Cu cation contacts are provided by cysteine 64, cysteine 68, and histidine 154.

This sequence belongs to the SCO1/2 family. As to quaternary structure, monomer.

The protein localises to the cell membrane. Necessary for insertion of copper into the active site of cytochrome c oxidase. May play a role in copper homeostasis or redox signaling. In Bacillus subtilis (strain 168), this protein is SCO1 protein homolog (ypmQ).